We begin with the raw amino-acid sequence, 54 residues long: ATP synthase protein 8 (54 aa).

Residues Trp8–Leu28 traverse the membrane as a helical segment.

This sequence belongs to the ATPase protein 8 family. In terms of assembly, F-type ATPases have 2 components, CF(1) - the catalytic core - and CF(0) - the membrane proton channel.

Its subcellular location is the mitochondrion membrane. Functionally, mitochondrial membrane ATP synthase (F(1)F(0) ATP synthase or Complex V) produces ATP from ADP in the presence of a proton gradient across the membrane which is generated by electron transport complexes of the respiratory chain. F-type ATPases consist of two structural domains, F(1) - containing the extramembraneous catalytic core and F(0) - containing the membrane proton channel, linked together by a central stalk and a peripheral stalk. During catalysis, ATP synthesis in the catalytic domain of F(1) is coupled via a rotary mechanism of the central stalk subunits to proton translocation. Part of the complex F(0) domain. Minor subunit located with subunit a in the membrane. This Patiria pectinifera (Starfish) protein is ATP synthase protein 8 (MT-ATP8).